The chain runs to 288 residues: Beta-lactamase PSE-1 (288 aa).

Positions 1–17 (MKFLLAFSLLIPSVVFA) are cleaved as a signal peptide. The active-site Acyl-ester intermediate is Ser65. A disulfide bridge links Cys72 with Cys118. 229–231 (RSG) provides a ligand contact to substrate.

It belongs to the class-A beta-lactamase family. As to quaternary structure, monomer.

It catalyses the reaction a beta-lactam + H2O = a substituted beta-amino acid. With respect to regulation, inhibited by p-chloromercuribenzoate but not by cloxacillin. Hydrolyzes penicillin, ampicillin and carbenicillin but not other antibiotics including oxacillin, methicillin and cloxacillin. This chain is Beta-lactamase PSE-1, found in Pseudomonas aeruginosa.